Here is a 256-residue protein sequence, read N- to C-terminus: Thiazole synthase (256 aa).

Catalysis depends on Lys95, which acts as the Schiff-base intermediate with DXP. 1-deoxy-D-xylulose 5-phosphate contacts are provided by residues Gly156, 182-183 (AG), and 204-205 (NT).

It belongs to the ThiG family. In terms of assembly, homotetramer. Forms heterodimers with either ThiH or ThiS.

The protein resides in the cytoplasm. The catalysed reaction is [ThiS sulfur-carrier protein]-C-terminal-Gly-aminoethanethioate + 2-iminoacetate + 1-deoxy-D-xylulose 5-phosphate = [ThiS sulfur-carrier protein]-C-terminal Gly-Gly + 2-[(2R,5Z)-2-carboxy-4-methylthiazol-5(2H)-ylidene]ethyl phosphate + 2 H2O + H(+). Its pathway is cofactor biosynthesis; thiamine diphosphate biosynthesis. In terms of biological role, catalyzes the rearrangement of 1-deoxy-D-xylulose 5-phosphate (DXP) to produce the thiazole phosphate moiety of thiamine. Sulfur is provided by the thiocarboxylate moiety of the carrier protein ThiS. In vitro, sulfur can be provided by H(2)S. The chain is Thiazole synthase from Salmonella schwarzengrund (strain CVM19633).